The primary structure comprises 201 residues: Putative manganese efflux pump MntP (201 aa).

6 helical membrane-spanning segments follow: residues 3–23, 39–59, 65–85, 116–136, 141–161, and 176–196; these read LVSIILISIGLSMDAFAVSIT, IGLFFGGFQALMPLIGWSIGI, IAALDHWIALILLSIIGGKMI, LTLLAIATSIDALAIGVSFAF, IINTIIIIGSITFVICFIGVM, and ILGGIVLIFIGIKIFIEHTNI.

The protein belongs to the MntP (TC 9.B.29) family.

It localises to the cell membrane. Functionally, probably functions as a manganese efflux pump. The polypeptide is Putative manganese efflux pump MntP (Clostridium botulinum (strain Loch Maree / Type A3)).